The primary structure comprises 376 residues: Putative phosphoserine aminotransferase (376 aa).

A disordered region spans residues 1 to 30 (MADQLTPSLDIPAALKPRDGRFGSGPSKVR). Arg50 contributes to the L-glutamate binding site. Residues 84 to 85 (AT), Phe108, Thr154, Asp176, and Gln199 each bind pyridoxal 5'-phosphate. At Lys200 the chain carries N6-(pyridoxal phosphate)lysine. 251–252 (NT) provides a ligand contact to pyridoxal 5'-phosphate.

It belongs to the class-V pyridoxal-phosphate-dependent aminotransferase family. SerC subfamily. Homodimer. It depends on pyridoxal 5'-phosphate as a cofactor.

Its subcellular location is the cytoplasm. It carries out the reaction O-phospho-L-serine + 2-oxoglutarate = 3-phosphooxypyruvate + L-glutamate. The catalysed reaction is 4-(phosphooxy)-L-threonine + 2-oxoglutarate = (R)-3-hydroxy-2-oxo-4-phosphooxybutanoate + L-glutamate. The protein operates within amino-acid biosynthesis; L-serine biosynthesis; L-serine from 3-phospho-D-glycerate: step 2/3. It participates in cofactor biosynthesis; pyridoxine 5'-phosphate biosynthesis; pyridoxine 5'-phosphate from D-erythrose 4-phosphate: step 3/5. Its function is as follows. Catalyzes the reversible conversion of 3-phosphohydroxypyruvate to phosphoserine and of 3-hydroxy-2-oxo-4-phosphonooxybutanoate to phosphohydroxythreonine. The chain is Putative phosphoserine aminotransferase from Mycobacterium leprae (strain TN).